A 366-amino-acid polypeptide reads, in one-letter code: Putative RING-H2 finger protein ATL21C (366 aa).

The first 23 residues, 1–23 (MTFSKQLFPFVFFLLFLVSLRHA), serve as a signal peptide directing secretion. The chain crosses the membrane as a helical span at residues 243–263 (LVLVISLSAVTVFVFPTCIAI). The RING-type; atypical zinc-finger motif lies at 320-362 (CPICLSEYASKETVRFIPECDHCFHVECIDVWLKIHGSCPLCR).

Belongs to the RING-type zinc finger family. ATL subfamily.

Its subcellular location is the membrane. It catalyses the reaction S-ubiquitinyl-[E2 ubiquitin-conjugating enzyme]-L-cysteine + [acceptor protein]-L-lysine = [E2 ubiquitin-conjugating enzyme]-L-cysteine + N(6)-ubiquitinyl-[acceptor protein]-L-lysine.. It functions in the pathway protein modification; protein ubiquitination. The sequence is that of Putative RING-H2 finger protein ATL21C (ATL21C) from Arabidopsis thaliana (Mouse-ear cress).